We begin with the raw amino-acid sequence, 363 residues long: UDP-N-acetylglucosamine--N-acetylmuramyl-(pentapeptide) pyrophosphoryl-undecaprenol N-acetylglucosamine transferase (363 aa).

Residues 12–14 (TAG), S196, and Q291 contribute to the UDP-N-acetyl-alpha-D-glucosamine site.

This sequence belongs to the glycosyltransferase 28 family. MurG subfamily.

The protein localises to the cell inner membrane. It carries out the reaction di-trans,octa-cis-undecaprenyl diphospho-N-acetyl-alpha-D-muramoyl-L-alanyl-D-glutamyl-meso-2,6-diaminopimeloyl-D-alanyl-D-alanine + UDP-N-acetyl-alpha-D-glucosamine = di-trans,octa-cis-undecaprenyl diphospho-[N-acetyl-alpha-D-glucosaminyl-(1-&gt;4)]-N-acetyl-alpha-D-muramoyl-L-alanyl-D-glutamyl-meso-2,6-diaminopimeloyl-D-alanyl-D-alanine + UDP + H(+). Its pathway is cell wall biogenesis; peptidoglycan biosynthesis. Functionally, cell wall formation. Catalyzes the transfer of a GlcNAc subunit on undecaprenyl-pyrophosphoryl-MurNAc-pentapeptide (lipid intermediate I) to form undecaprenyl-pyrophosphoryl-MurNAc-(pentapeptide)GlcNAc (lipid intermediate II). In Legionella pneumophila (strain Corby), this protein is UDP-N-acetylglucosamine--N-acetylmuramyl-(pentapeptide) pyrophosphoryl-undecaprenol N-acetylglucosamine transferase.